We begin with the raw amino-acid sequence, 97 residues long: Large ribosomal subunit protein eL21 (97 aa).

A disordered region spans residues 1–26 (MQKSEGFRSKTRYKLQKHPRQKGMAP). Basic residues predominate over residues 9-21 (SKTRYKLQKHPRQ).

Belongs to the eukaryotic ribosomal protein eL21 family.

The protein is Large ribosomal subunit protein eL21 of Methanococcus maripaludis (strain C5 / ATCC BAA-1333).